A 128-amino-acid polypeptide reads, in one-letter code: Translation initiation factor 5A (128 aa).

Lysine 35 carries the hypusine modification.

This sequence belongs to the eIF-5A family.

It localises to the cytoplasm. Functionally, functions by promoting the formation of the first peptide bond. This is Translation initiation factor 5A (eif5a) from Archaeoglobus fulgidus (strain ATCC 49558 / DSM 4304 / JCM 9628 / NBRC 100126 / VC-16).